Consider the following 90-residue polypeptide: MGDYFDILTLILTAIYLLIGGGFIIYIYDTYKRTKQEFLIYLSIGFFLLIIGASLPVLTFVAQVLDMSVVVVAILMQIAGLSSIFYSIVR.

Helical transmembrane passes span 5 to 27 (FDILTLILTAIYLLIGGGFIIYI), 40 to 62 (IYLSIGFFLLIIGASLPVLTFVA), and 67 to 89 (MSVVVVAILMQIAGLSSIFYSIV).

The protein resides in the cell membrane. This is an uncharacterized protein from Archaeoglobus fulgidus (strain ATCC 49558 / DSM 4304 / JCM 9628 / NBRC 100126 / VC-16).